The primary structure comprises 702 residues: Amino-acid racemase (702 aa).

The Cytoplasmic portion of the chain corresponds to 1 to 12 (MKHRANGIDLFR). The chain crosses the membrane as a helical span at residues 13 to 33 (IFAATMVVAIHTFPFQSIAPF). Over 34-39 (LDEVIT) the chain is Extracellular. Residues 40 to 60 (LTVFRVAVPFFFMITGYFLLG) form a helical membrane-spanning segment. The Cytoplasmic portion of the chain corresponds to 61-77 (RLSLNFSYNNNQRVKKY). The chain crosses the membrane as a helical span at residues 78–98 (LYKIGMIYLYSILLYFPLSLL). Residues 99–120 (NGTISLKMNILLLLKVFIFDGT) lie on the Extracellular side of the membrane. Residues 121-141 (FYHLWYFPASIIGTILVTLLL) traverse the membrane as a helical segment. Position 142 (arginine 142) is a topological domain, cytoplasmic. A helical transmembrane segment spans residues 143 to 163 (SIGFKLTVAFSTCLYLVGLGG). Over 164 to 191 (DSWYGITNQVPLLNKLYTFIFSWSDYTR) the chain is Extracellular. The chain crosses the membrane as a helical span at residues 192–212 (SGVFFTPVFLCLGIFAYRVSK). At 213–218 (KLTASK) the chain is on the cytoplasmic side. Residues 219–239 (ILNLLFYVFIIGMTFESIFLH) traverse the membrane as a helical segment. The Extracellular portion of the chain corresponds to 240 to 248 (RFTNVKHDS). Residues 249–269 (MYLLLPSCALILFLMLLNWQP) form a helical membrane-spanning segment. The Cytoplasmic segment spans residues 270 to 276 (KLKVKES). Residues 277–297 (ADLTLLVYILHPLVIVIVHSI) traverse the membrane as a helical segment. Topologically, residues 298-307 (SKYIPILKNS) are extracellular. A helical transmembrane segment spans residues 308–328 (LLNFLLVVVCSFILAQLLLNL). The Cytoplasmic portion of the chain corresponds to 329–702 (KRKLRVSKQK…LGSRLGTELN (374 aa)). Residues 337 to 702 (QKIPFERASK…LGSRLGTELN (366 aa)) form a racemase region. The active-site Proton acceptor is lysine 375. The residue at position 375 (lysine 375) is an N6-(pyridoxal phosphate)lysine. Arginine 469 serves as a coordination point for substrate. Tyrosine 601 functions as the Proton acceptor in the catalytic mechanism. Position 650 (methionine 650) interacts with substrate.

In the N-terminal section; belongs to the acyltransferase 3 family. The protein in the C-terminal section; belongs to the alanine racemase family. Pyridoxal 5'-phosphate is required as a cofactor.

It is found in the cell membrane. The protein is Amino-acid racemase (vanTE) of Enterococcus faecalis (Streptococcus faecalis).